We begin with the raw amino-acid sequence, 513 residues long: Quiannulatic acid synthase (513 aa).

The chain crosses the membrane as a helical span at residues 14-34 (VFTFCNIILALASLVVAQCVY). N-linked (GlcNAc...) asparagine glycosylation occurs at N308. C477 provides a ligand contact to heme.

Belongs to the cytochrome P450 family. The cofactor is heme.

It localises to the membrane. It carries out the reaction quiannulatene + 3 reduced [NADPH--hemoprotein reductase] + 3 O2 = quiannulatate + 3 oxidized [NADPH--hemoprotein reductase] + 4 H2O + 4 H(+). It functions in the pathway secondary metabolite biosynthesis; terpenoid biosynthesis. Its function is as follows. Cytochrome P450 monooxygenase; part of the gene cluster that mediates the biosynthesis of the pentacyclic sesterterpene quiannulatic acid. The first step of the pathway is performed by the sesterterpene synthase (QS) that possesses both prenyl transferase and terpene cyclase activity, converting isopentenyl diphosphate and dimethylallyl diphosphate into geranylfarnesyl diphosphate (GFPP) and further converting GFPP into quiannulatene via an unprecedented cyclization mode which involves three rounds of hydride shifts and two successive C-C bond migrations to construct the 5-6-5-5-5 fused ring. The cytochrome P450 monooxygenase Qnn-P450 then oxidizes quiannulatene at C-19 in 3 successive reactions to afford quiannulatic acid. This Emericella variicolor (Aspergillus stellatus) protein is Quiannulatic acid synthase.